The following is a 371-amino-acid chain: Histidinol-phosphate aminotransferase (371 aa).

Residue lysine 229 is modified to N6-(pyridoxal phosphate)lysine.

The protein belongs to the class-II pyridoxal-phosphate-dependent aminotransferase family. Histidinol-phosphate aminotransferase subfamily. Homodimer. Pyridoxal 5'-phosphate serves as cofactor.

It catalyses the reaction L-histidinol phosphate + 2-oxoglutarate = 3-(imidazol-4-yl)-2-oxopropyl phosphate + L-glutamate. It functions in the pathway amino-acid biosynthesis; L-histidine biosynthesis; L-histidine from 5-phospho-alpha-D-ribose 1-diphosphate: step 7/9. The chain is Histidinol-phosphate aminotransferase from Roseiflexus castenholzii (strain DSM 13941 / HLO8).